A 120-amino-acid polypeptide reads, in one-letter code: Large ribosomal subunit protein uL18 (120 aa).

This sequence belongs to the universal ribosomal protein uL18 family. As to quaternary structure, part of the 50S ribosomal subunit; part of the 5S rRNA/L5/L18/L25 subcomplex. Contacts the 5S and 23S rRNAs.

Functionally, this is one of the proteins that bind and probably mediate the attachment of the 5S RNA into the large ribosomal subunit, where it forms part of the central protuberance. This chain is Large ribosomal subunit protein uL18, found in Agrobacterium fabrum (strain C58 / ATCC 33970) (Agrobacterium tumefaciens (strain C58)).